The following is a 429-amino-acid chain: Enolase (429 aa).

Gln168 contributes to the (2R)-2-phosphoglycerate binding site. Glu210 (proton donor) is an active-site residue. Mg(2+) contacts are provided by Asp247, Glu288, and Asp315. (2R)-2-phosphoglycerate contacts are provided by Lys340, Arg369, Ser370, and Lys391. The active-site Proton acceptor is Lys340.

Belongs to the enolase family. Mg(2+) is required as a cofactor.

It is found in the cytoplasm. The protein resides in the secreted. Its subcellular location is the cell surface. It catalyses the reaction (2R)-2-phosphoglycerate = phosphoenolpyruvate + H2O. It participates in carbohydrate degradation; glycolysis; pyruvate from D-glyceraldehyde 3-phosphate: step 4/5. Functionally, catalyzes the reversible conversion of 2-phosphoglycerate (2-PG) into phosphoenolpyruvate (PEP). It is essential for the degradation of carbohydrates via glycolysis. This chain is Enolase, found in Nostoc sp. (strain PCC 7120 / SAG 25.82 / UTEX 2576).